Here is a 338-residue protein sequence, read N- to C-terminus: Fructose-1,6-bisphosphatase class 1 1 (338 aa).

The Mg(2+) site is built by glutamate 94, aspartate 116, leucine 118, and aspartate 119. Substrate-binding positions include 119–122, asparagine 210, and lysine 276; that span reads DGSS. Position 282 (glutamate 282) interacts with Mg(2+).

This sequence belongs to the FBPase class 1 family. Homotetramer. Mg(2+) serves as cofactor.

It is found in the cytoplasm. It catalyses the reaction beta-D-fructose 1,6-bisphosphate + H2O = beta-D-fructose 6-phosphate + phosphate. Its pathway is carbohydrate biosynthesis; gluconeogenesis. This is Fructose-1,6-bisphosphatase class 1 1 from Paraburkholderia xenovorans (strain LB400).